Consider the following 326-residue polypeptide: Protein ORF5 in retron Ec67 (326 aa).

The interval 1–24 is disordered; it reads MGKSKKNRAAATNQLKHKSQTSAE. The span at 10–24 shows a compositional bias: polar residues; it reads AATNQLKHKSQTSAE.

This sequence belongs to the phage portal family. PBSX subfamily.

This is Protein ORF5 in retron Ec67 from Escherichia coli.